The following is a 236-amino-acid chain: Phosphatidylserine decarboxylase proenzyme (236 aa).

The Schiff-base intermediate with substrate; via pyruvic acid role is filled by serine 203. A Pyruvic acid (Ser); by autocatalysis modification is found at serine 203.

Belongs to the phosphatidylserine decarboxylase family. PSD-A subfamily. Heterodimer of a large membrane-associated beta subunit and a small pyruvoyl-containing alpha subunit. It depends on pyruvate as a cofactor. In terms of processing, is synthesized initially as an inactive proenzyme. Formation of the active enzyme involves a self-maturation process in which the active site pyruvoyl group is generated from an internal serine residue via an autocatalytic post-translational modification. Two non-identical subunits are generated from the proenzyme in this reaction, and the pyruvate is formed at the N-terminus of the alpha chain, which is derived from the carboxyl end of the proenzyme. The post-translation cleavage follows an unusual pathway, termed non-hydrolytic serinolysis, in which the side chain hydroxyl group of the serine supplies its oxygen atom to form the C-terminus of the beta chain, while the remainder of the serine residue undergoes an oxidative deamination to produce ammonia and the pyruvoyl prosthetic group on the alpha chain.

It localises to the cell membrane. The catalysed reaction is a 1,2-diacyl-sn-glycero-3-phospho-L-serine + H(+) = a 1,2-diacyl-sn-glycero-3-phosphoethanolamine + CO2. It participates in phospholipid metabolism; phosphatidylethanolamine biosynthesis; phosphatidylethanolamine from CDP-diacylglycerol: step 2/2. Catalyzes the formation of phosphatidylethanolamine (PtdEtn) from phosphatidylserine (PtdSer). The protein is Phosphatidylserine decarboxylase proenzyme of Saccharopolyspora erythraea (strain ATCC 11635 / DSM 40517 / JCM 4748 / NBRC 13426 / NCIMB 8594 / NRRL 2338).